A 578-amino-acid chain; its full sequence is MAEESRKPSAPSPPDQTPEEDLVIVKVEEDHGWDQESSLHENNPLGQEVFRLRFRQLCYQETLGPREALIQLRALCHQWLRPDLNTKEQILELLVLEQFLTILPEELQTLVKEHQLENGEEVVTLLEDLERQIDILGRPVSARVHGHRVLWEEVVHSASAPEPPNTQLQSEATQHKSPVPQESQERAMSTSQSPTRSQKGSSGDQEMTATLLTAGFQTLEKIEDMAVSLIREEWLLDPSQKDLSRDNRPEDFRNVFSLGGETRSENRELASKQVISTGIHPHGETAAKCNGDVIRGLEHEEARDLLGRLERQRGNPTQERRHKCDECGKSFAQSSGLVRHWRIHTGEKPYQCNVCGKAFSYRSALLSHQDIHNKVKRYHCKECGKAFSQNTGLILHQRIHTGEKPYQCNQCGKAFSQSAGLILHQRIHSGERPYECNECGKAFSHSSHLIGHQRIHTGEKPYECDECGKTFRRSSHLIGHQRSHTGEKPYKCNECGRAFSQKSGLIEHQRIHTGERPYKCKECGKAFNGNTGLIQHLRIHTGEKPYQCNECGKAFIQRSSLIRHQRIHSGEKSESISV.

The tract at residues 1–20 (MAEESRKPSAPSPPDQTPEE) is disordered. Serine 12 carries the phosphoserine modification. Lysine 26 is covalently cross-linked (Glycyl lysine isopeptide (Lys-Gly) (interchain with G-Cter in SUMO2)). Residues 51–133 (RLRFRQLCYQ…TLLEDLERQI (83 aa)) enclose the SCAN box domain. The segment at 158-205 (ASAPEPPNTQLQSEATQHKSPVPQESQERAMSTSQSPTRSQKGSSGDQ) is disordered. Polar residues predominate over residues 165 to 205 (NTQLQSEATQHKSPVPQESQERAMSTSQSPTRSQKGSSGDQ). Residues lysine 176 and lysine 199 each participate in a glycyl lysine isopeptide (Lys-Gly) (interchain with G-Cter in SUMO2) cross-link. Position 201 is a phosphoserine (serine 201). Residues 220-316 (EKIEDMAVSL…GRLERQRGNP (97 aa)) enclose the KRAB domain. Residues lysine 221, lysine 272, and lysine 288 each participate in a glycyl lysine isopeptide (Lys-Gly) (interchain with G-Cter in SUMO2) cross-link. 2 C2H2-type zinc fingers span residues 322–344 (HKCD…WRIH) and 350–372 (YQCN…QDIH). Residues lysine 374 and lysine 376 each participate in a glycyl lysine isopeptide (Lys-Gly) (interchain with G-Cter in SUMO2) cross-link. C2H2-type zinc fingers lie at residues 378–400 (YHCK…QRIH), 406–428 (YQCN…QRIH), 434–456 (YECN…QRIH), 462–484 (YECD…QRSH), 490–512 (YKCN…QRIH), 518–540 (YKCK…LRIH), and 546–568 (YQCN…QRIH). Residues lysine 413 and lysine 441 each participate in a glycyl lysine isopeptide (Lys-Gly) (interchain with G-Cter in SUMO2) cross-link. Lysine 502 participates in a covalent cross-link: Glycyl lysine isopeptide (Lys-Gly) (interchain with G-Cter in SUMO2). Residue lysine 572 forms a Glycyl lysine isopeptide (Lys-Gly) (interchain with G-Cter in SUMO2) linkage.

This sequence belongs to the krueppel C2H2-type zinc-finger protein family.

The protein localises to the nucleus. Functionally, may be involved in transcriptional regulation. This chain is Zinc finger protein with KRAB and SCAN domains 8 (ZKSCAN8), found in Pan troglodytes (Chimpanzee).